The following is a 257-amino-acid chain: Zinc import ATP-binding protein ZnuC (257 aa).

In terms of domain architecture, ABC transporter spans 6–221 (IRLEQVGVSF…PAFVELFGQN (216 aa)). 38–45 (GPNGAGKT) contributes to the ATP binding site.

The protein belongs to the ABC transporter superfamily. Zinc importer (TC 3.A.1.15.5) family. The complex is composed of two ATP-binding proteins (ZnuC), two transmembrane proteins (ZnuB) and a solute-binding protein (ZnuA).

The protein resides in the cell inner membrane. The catalysed reaction is Zn(2+)(out) + ATP(in) + H2O(in) = Zn(2+)(in) + ADP(in) + phosphate(in) + H(+)(in). Its function is as follows. Part of the ABC transporter complex ZnuABC involved in zinc import. Responsible for energy coupling to the transport system. In Pseudomonas entomophila (strain L48), this protein is Zinc import ATP-binding protein ZnuC.